The sequence spans 112 residues: Cell cycle protein GpsB (112 aa).

Residues 32–75 are a coiled coil; the sequence is LDDIIKDYETYISTIEELRQENTRLKEEVKQAKKRQEAAQTTVS.

Belongs to the GpsB family. Forms polymers through the coiled coil domains. Interacts with PBP1, MreC and EzrA.

It is found in the cytoplasm. Functionally, divisome component that associates with the complex late in its assembly, after the Z-ring is formed, and is dependent on DivIC and PBP2B for its recruitment to the divisome. Together with EzrA, is a key component of the system that regulates PBP1 localization during cell cycle progression. Its main role could be the removal of PBP1 from the cell pole after pole maturation is completed. Also contributes to the recruitment of PBP1 to the division complex. Not essential for septum formation. The polypeptide is Cell cycle protein GpsB (Streptococcus mutans serotype c (strain ATCC 700610 / UA159)).